A 418-amino-acid chain; its full sequence is Chromo domain-containing protein rhino (418 aa).

The region spanning 24-74 (YVVEKILGKRFVNGRPQVLVKWSGFPNENNTWEPLENVGNCMKLVSDFESE) is the Chromo domain. Composition is skewed to low complexity over residues 84 to 99 (AKSV…SSGP) and 107 to 120 (SSSK…KSVQ). 2 disordered regions span residues 84-167 (AKSV…TDST) and 199-337 (PTKD…RCPR). The segment covering 131–143 (NQKKGKNIKKTAG) has biased composition (basic residues). The segment covering 152-167 (PKTQMPSTSQVSTDST) has biased composition (polar residues). A compositionally biased stretch (basic and acidic residues) spans 218–228 (RLIEFPQREDA). Positions 258–275 (GESSSSMSLPTVSSTSSE) are enriched in low complexity. Positions 276-285 (KSIKVTKSEP) are enriched in basic and acidic residues. A required for interaction with del/deadlock region spans residues 353–418 (TKPFGVNRGL…FESLRIIVPK (66 aa)).

As to quaternary structure, homodimer in solution. Dimerization is essential for chromatin binding. Component of the Rhino-Deadlock-Cutoff (RDC) complex, composed of rhi/rhino, del/deadlock and cuff/cutoff. Interacts (via C-terminus) with del/deadlock (via N-terminus); this interaction is direct. Two copies of del/deadlock associate with each rhi/rhino dimer. Interacts with cuff/cutoff; this interaction is indirect and is mediated by del/deadlock. Interacts (via Chromo domain) with kipf/kipferl (via C2H2 type zinc finger 4). Interacts (via Chromo domain) with His3/histone H3 (via N-terminus di- or tri-methylated on 'Lys-10' (H3K9me2/3)); this interaction is direct. Two His3 N-terminal tails oriented anti-parallel to each other are required for dimer binding to His3. Female specific, expressed in both somatic and germline cells but highly enriched in ovaries. In the germarium of the developing oocyte expressed in germline stem cells, cystoblasts and developing germline cysts. Expressed in nurse cells in the germarium and egg chamber.

Its subcellular location is the nucleus. The protein resides in the chromosome. In terms of biological role, involved in piRNA (piwi-interacting RNA)-mediated transposon repression. May be involved in formation of the perinuclear nuage, a subcellular structure implicated in RNA processing that may be involved in transposon RNA surveillance and silencing. Required for ping-pong amplification during piRNA biogenesis, probably by promoting transcription of piRNA precursors. As part of the Rhino-Deadlock-Cutoff (RDC) Complex associates with, and drives non-canonical transcription of germline specific dual-strand piRNA clusters 80F, 38C and 42AB, but not single-stranded piRNA cluster 20A. Induction of piRNA expression is potentially achieved through a mechanism that prevents transcriptional termination and leads to readthrough from flanking transcription units. Recruited to specific chromatin regions by a combination of H3K9me2/3 histone methylation and differentially expressed sequence-specific recruitment factors. This association may involve direct interaction with DNA. Associates with chromatin upon exposure to homologous piRNA and facilitates transcriptional read-through. As part of the RDC complex, involved in suppression of splicing. In ovaries, recruitment to specific heterochromatin clusters is nucleated and stabilized by kipf/kipferl. During oogenesis, involved in axis specification and may regulate chromosome condensation at the onset of a mitotic-like phase that occurs during nurse cell chromosome duplication. Involved in the distribution of mRNAs for proteins that play a role in anterior-posterior and dorsal-ventral axes specification during development of the oocyte, including grk/gurken, osk/oskar and vas/vasa. Mitigates meiotic double strand breaks and interacts with DNA damage signaling to mediate axis specification. The polypeptide is Chromo domain-containing protein rhino (Drosophila melanogaster (Fruit fly)).